A 65-amino-acid polypeptide reads, in one-letter code: Toxin Cbi1 (65 aa).

One can recognise an LCN-type CS-alpha/beta domain in the interval 1-64 (KDGYPMDNKG…VWDRATNKCR (64 aa)). Cystine bridges form between Cys-11-Cys-63, Cys-15-Cys-37, Cys-22-Cys-44, and Cys-26-Cys-46.

Belongs to the long (4 C-C) scorpion toxin superfamily. Sodium channel inhibitor family. Beta subfamily. In terms of tissue distribution, expressed by the venom gland.

The protein localises to the secreted. In terms of biological role, beta toxins bind voltage-independently at site-4 of sodium channels (Nav) and shift the voltage of activation toward more negative potentials thereby affecting sodium channel activation and promoting spontaneous and repetitive firing. The protein is Toxin Cbi1 of Centruroides bicolor (Scorpion).